We begin with the raw amino-acid sequence, 105 residues long: uncharacterized protein (105 aa).

A Hcy-binding domain is found at 1 to 101; sequence MMDLGDKINP…KDIQEISAAV (101 aa).

This is an uncharacterized protein from Saccharomyces cerevisiae (strain ATCC 204508 / S288c) (Baker's yeast).